The primary structure comprises 688 residues: Probable xyloglucan glycosyltransferase 7 (688 aa).

The tract at residues 1–25 is disordered; that stretch reads MAPSWWGRSGGGGVGNGGGTPVVVK. Positions 8 to 20 are enriched in gly residues; sequence RSGGGGVGNGGGT. A run of 2 helical transmembrane segments spans residues 121–141 and 183–203; these read VSLV…LQGW and VALF…CFWI. Asp269 is an active-site residue. Residues Asp328 and Asp330 each coordinate substrate. Asp422 is an active-site residue. The next 2 helical transmembrane spans lie at 500 to 520 and 525 to 545; these read LILP…TMFV and LPAW…ILPA. The tract at residues 604–635 is disordered; it reads HSKQQRVGSAPNLDALTKEESNPKKDSKKKKH. The span at 619–628 shows a compositional bias: basic and acidic residues; it reads LTKEESNPKK. The next 2 membrane-spanning stretches (helical) occupy residues 638 to 657 and 663 to 683; these read IYRK…ARSL and IHFY…LDLI.

It belongs to the glycosyltransferase 2 family. Plant cellulose synthase-like C subfamily.

It localises to the golgi apparatus membrane. In terms of biological role, probable beta-1,4-glucan synthase rather involved in the synthesis of the xyloglucan backbone than cellulose. Seems to work simultaneously with xyloglucan 6-xylosyltransferase. Xyloglucan is a noncellulosic polysaccharides of plant cell wall and consists of a glucan backbone substituted by xylose, galactose and fucose. This chain is Probable xyloglucan glycosyltransferase 7 (CSLC7), found in Oryza sativa subsp. japonica (Rice).